We begin with the raw amino-acid sequence, 306 residues long: MKVYKRLYELLGRGYKPLKSARLIKRGKDYYIGITLQKAVKEKKIKKPRYVINVDLNVQRNLACIGIFEVDWEKRESKLYGIKFVNGKLLRLVYKRDYLFEEIRKKQRQTGRSPQVGDNSRLWKKVNNLNRDIALKVAKEISDIAREFSEKGEVIVVFEKLKGLRGRKGRSKKLNRKINFWMRRKIQERVKELGLEEGFGLDFVYPHYTSKKCSKCGYEGERFSPSGSKALFLCKKCGYVVNADVNAVFNQHFLYLSHLLNGGGKARPVVRVGTSLKSPSREGHNLSGVPKATTTFFYISSLLSTF.

The Zn(2+) site is built by cysteine 213, cysteine 216, cysteine 234, and cysteine 237.

The protein belongs to the transposase 35 family.

The chain is TnpB-like protein aq_aa05 from Aquifex aeolicus (strain VF5).